The following is a 464-amino-acid chain: tRNA modification GTPase MnmE (464 aa).

Positions 27, 90, and 129 each coordinate (6S)-5-formyl-5,6,7,8-tetrahydrofolate. The 163-residue stretch at 222 to 384 (GVTLVLAGSV…LYDKIKTLIS (163 aa)) folds into the TrmE-type G domain. GTP contacts are provided by residues 232–237 (NAGKSS), 251–257 (SSYPGTT), and 276–279 (DTAG). Positions 236 and 257 each coordinate Mg(2+). Residue Lys464 coordinates (6S)-5-formyl-5,6,7,8-tetrahydrofolate.

Belongs to the TRAFAC class TrmE-Era-EngA-EngB-Septin-like GTPase superfamily. TrmE GTPase family. In terms of assembly, homodimer. Heterotetramer of two MnmE and two MnmG subunits. K(+) is required as a cofactor.

The protein localises to the cytoplasm. Its function is as follows. Exhibits a very high intrinsic GTPase hydrolysis rate. Involved in the addition of a carboxymethylaminomethyl (cmnm) group at the wobble position (U34) of certain tRNAs, forming tRNA-cmnm(5)s(2)U34. In Borrelia garinii subsp. bavariensis (strain ATCC BAA-2496 / DSM 23469 / PBi) (Borreliella bavariensis), this protein is tRNA modification GTPase MnmE.